A 23-amino-acid polypeptide reads, in one-letter code: Hemocyanin subunit 4 (23 aa).

Belongs to the tyrosinase family. Hemocyanin subfamily. In terms of tissue distribution, hemolymph.

Its subcellular location is the secreted. It localises to the extracellular space. In terms of biological role, hemocyanins are copper-containing oxygen carriers occurring freely dissolved in the hemolymph of many mollusks and arthropods. The sequence is that of Hemocyanin subunit 4 from Carcinus maenas (Common shore crab).